Here is a 197-residue protein sequence, read N- to C-terminus: 3-isopropylmalate dehydratase small subunit (197 aa).

The protein belongs to the LeuD family. LeuD type 1 subfamily. Heterodimer of LeuC and LeuD.

It carries out the reaction (2R,3S)-3-isopropylmalate = (2S)-2-isopropylmalate. It participates in amino-acid biosynthesis; L-leucine biosynthesis; L-leucine from 3-methyl-2-oxobutanoate: step 2/4. In terms of biological role, catalyzes the isomerization between 2-isopropylmalate and 3-isopropylmalate, via the formation of 2-isopropylmaleate. The protein is 3-isopropylmalate dehydratase small subunit of Streptomyces avermitilis (strain ATCC 31267 / DSM 46492 / JCM 5070 / NBRC 14893 / NCIMB 12804 / NRRL 8165 / MA-4680).